Here is a 184-residue protein sequence, read N- to C-terminus: Photosystem I assembly protein Ycf4 (184 aa).

2 helical membrane-spanning segments follow: residues 19-39 (ISNF…VLVG) and 64-84 (LVMS…WCTI).

This sequence belongs to the Ycf4 family.

It is found in the plastid. The protein localises to the chloroplast thylakoid membrane. In terms of biological role, seems to be required for the assembly of the photosystem I complex. The protein is Photosystem I assembly protein Ycf4 of Oenothera elata subsp. hookeri (Hooker's evening primrose).